The chain runs to 475 residues: MNYEAIIGLEVHCELLTKTKAFCGCSTEFGAKPNTHVCPICLGLPGALPKLNKKVVEYGMKAGIALNCSINKLCRMDRKNYYYVDCPKNYQITQSEYPLCKDGYIEISLENGEAKKISIERIHIEEDAGKLIHNSQGTFVDFNRAGVPLIEIVSNPDMRNSKEAVEYLIHLRSVLKAIGVSDCKMEEGSLRCDANISVREKGNKEFGVKCEIKNMNSFKALEKALNYEFERQIEVLKNGGKVIQETRRWDEENNKTVVMRSKEDANDYRYFPDGDLVSINISDNWIEEIKESIGELPHEKEKRFIEQYEIPKYDTKIITSSLEMAEFFEEATKISKNAKAVSNWLMGDISRLLNKNNIKIEEIKFSPKDLGEFIKLIDKKIISNSIGKDLIEEMFLTGKSPKDIVEEKGLVQNNNKEEILEIVKKVLHDNPENVTSYKNGKTKLLGYFVGQVMKITKGKANPKIVNEIILKELNM.

It belongs to the GatB/GatE family. GatB subfamily. Heterotrimer of A, B and C subunits.

The catalysed reaction is L-glutamyl-tRNA(Gln) + L-glutamine + ATP + H2O = L-glutaminyl-tRNA(Gln) + L-glutamate + ADP + phosphate + H(+). It carries out the reaction L-aspartyl-tRNA(Asn) + L-glutamine + ATP + H2O = L-asparaginyl-tRNA(Asn) + L-glutamate + ADP + phosphate + 2 H(+). Its function is as follows. Allows the formation of correctly charged Asn-tRNA(Asn) or Gln-tRNA(Gln) through the transamidation of misacylated Asp-tRNA(Asn) or Glu-tRNA(Gln) in organisms which lack either or both of asparaginyl-tRNA or glutaminyl-tRNA synthetases. The reaction takes place in the presence of glutamine and ATP through an activated phospho-Asp-tRNA(Asn) or phospho-Glu-tRNA(Gln). This is Aspartyl/glutamyl-tRNA(Asn/Gln) amidotransferase subunit B from Clostridium novyi (strain NT).